Here is a 145-residue protein sequence, read N- to C-terminus: Bacilliredoxin MW1318 (145 aa).

This sequence belongs to the bacilliredoxin family.

The chain is Bacilliredoxin MW1318 from Staphylococcus aureus (strain MW2).